A 303-amino-acid chain; its full sequence is Coenzyme PQQ synthesis protein B (303 aa).

It belongs to the PqqB family.

It participates in cofactor biosynthesis; pyrroloquinoline quinone biosynthesis. In terms of biological role, may be involved in the transport of PQQ or its precursor to the periplasm. This Pseudomonas fluorescens (strain SBW25) protein is Coenzyme PQQ synthesis protein B.